A 188-amino-acid polypeptide reads, in one-letter code: Putative manganese efflux pump MntP (188 aa).

A run of 6 helical transmembrane segments spans residues 2–22, 40–60, 66–86, 107–127, 133–153, and 167–187; these read LYIE…AVSV, IASV…TMGL, ICAF…GKMI, LCGL…SLAI, LLQA…GVYF, and LIGG…HLFF.

Belongs to the MntP (TC 9.B.29) family.

Its subcellular location is the cell inner membrane. Probably functions as a manganese efflux pump. In Parabacteroides distasonis (strain ATCC 8503 / DSM 20701 / CIP 104284 / JCM 5825 / NCTC 11152), this protein is Putative manganese efflux pump MntP.